We begin with the raw amino-acid sequence, 71 residues long: MAKNSKYSDKQVDAVLHDMIAVLEKHQAPVELSLIVLGNMVTNLLASSVGTHQQAALAQAFSDALMNSVKK.

It belongs to the UPF0352 family.

The protein is UPF0352 protein Asuc_0778 of Actinobacillus succinogenes (strain ATCC 55618 / DSM 22257 / CCUG 43843 / 130Z).